The primary structure comprises 214 residues: MISFLRGTVAHVGLSSAVIDLNGAGMSVNATPQTLSGLRTGEEGKLFTSLIVREDSLTLFGFSSDDEREVFDVLLSVSGVGPRLALAVLAVHDPEAIRVAAHTGDGKAFTKVPGIGPKVAGRIVLELAGKLVPHGTGAAAAPAAAASAPWKPQVVAAMTSLGWSEKDATSSIDKALSDSPELEAGGQVAEILRATLRWLGQDGARAGNRVGSRG.

Residues 1–63 (MISFLRGTVA…EDSLTLFGFS (63 aa)) are domain I. The segment at 64–142 (SDDEREVFDV…PHGTGAAAAP (79 aa)) is domain II. The tract at residues 143 to 153 (AAAASAPWKPQ) is flexible linker. Positions 153-214 (QVVAAMTSLG…RAGNRVGSRG (62 aa)) are domain III.

It belongs to the RuvA family. As to quaternary structure, homotetramer. Forms an RuvA(8)-RuvB(12)-Holliday junction (HJ) complex. HJ DNA is sandwiched between 2 RuvA tetramers; dsDNA enters through RuvA and exits via RuvB. An RuvB hexamer assembles on each DNA strand where it exits the tetramer. Each RuvB hexamer is contacted by two RuvA subunits (via domain III) on 2 adjacent RuvB subunits; this complex drives branch migration. In the full resolvosome a probable DNA-RuvA(4)-RuvB(12)-RuvC(2) complex forms which resolves the HJ.

It is found in the cytoplasm. Functionally, the RuvA-RuvB-RuvC complex processes Holliday junction (HJ) DNA during genetic recombination and DNA repair, while the RuvA-RuvB complex plays an important role in the rescue of blocked DNA replication forks via replication fork reversal (RFR). RuvA specifically binds to HJ cruciform DNA, conferring on it an open structure. The RuvB hexamer acts as an ATP-dependent pump, pulling dsDNA into and through the RuvAB complex. HJ branch migration allows RuvC to scan DNA until it finds its consensus sequence, where it cleaves and resolves the cruciform DNA. This Arthrobacter sp. (strain FB24) protein is Holliday junction branch migration complex subunit RuvA.